We begin with the raw amino-acid sequence, 212 residues long: Peptidyl-prolyl cis-trans isomerase-like 3 (212 aa).

One can recognise a PPIase cyclophilin-type domain in the interval 1 to 198; sequence MSVTLHTTHG…EGEEGGYEAI (198 aa).

This sequence belongs to the cyclophilin-type PPIase family. PPIL3 subfamily.

It catalyses the reaction [protein]-peptidylproline (omega=180) = [protein]-peptidylproline (omega=0). Functionally, PPIases accelerate the folding of proteins. It catalyzes the cis-trans isomerization of proline imidic peptide bonds in oligopeptides. This chain is Peptidyl-prolyl cis-trans isomerase-like 3 (cyp10), found in Aspergillus fumigatus (strain ATCC MYA-4609 / CBS 101355 / FGSC A1100 / Af293) (Neosartorya fumigata).